A 7031-amino-acid chain; its full sequence is Extracellular matrix-binding protein EbhB (7031 aa).

The signal sequence occupies residues 1-39 (MNYRDKIQKFSIRKYTVGTFSTVIATLVFLGFNTSQAHA). The span at 41–59 (ETNQPASVVKQKQQSNNEQ) shows a compositional bias: polar residues. Disordered stretches follow at residues 41–86 (ETNQ…HENE), 99–152 (KVAQ…GNDN), 250–277 (PQRQ…PRSV), 1342–1373 (NNIT…ATTD), and 2418–2438 (TITP…TLTA). Over residues 65 to 80 (SQVQNSQNSQNGQSLS) the composition is skewed to low complexity. Polar residues predominate over residues 99-117 (KVAQSSTTNDEQPASQNVN). A compositionally biased stretch (basic and acidic residues) spans 130 to 140 (PDKEQSKHKQN). 4 stretches are compositionally biased toward polar residues: residues 141 to 151 (ESQSANKNGND), 250 to 266 (PQRQ…QTRS), 1360 to 1373 (FRTT…ATTD), and 2427 to 2438 (HSVSSNPSTLTA). FIVAR domains follow at residues 2524 to 2580 (AKNH…VSDA), 2610 to 2666 (SKNN…ISDE), 2687 to 2750 (DTHA…VQSA), 2780 to 2836 (AKTK…IAAE), 2864 to 2919 (AKTQ…IRQN), 2947 to 3002 (AKNQ…INTN), 3030 to 3085 (AKTQ…INDK), 3154 to 3212 (AMTK…VNQK), 3280 to 3339 (AMTG…VNNA), 3407 to 3465 (AMGN…VNRA), 3533 to 3591 (AMGN…VTEA), 3659 to 3717 (AMNT…ITQK), 3785 to 3843 (AMAS…VEAA), 3911 to 3969 (AMGN…VEQA), 4037 to 4095 (AMGT…VTAA), 4163 to 4221 (AMKG…ITQA), 4289 to 4347 (QMGN…VEAA), 4415 to 4473 (AMAN…VENA), 4541 to 4599 (AMGT…INQI), 4667 to 4725 (AMGQ…VDRA), 4793 to 4851 (AMNS…VDNA), 4919 to 4977 (AMGA…INGM), 5045 to 5103 (AMTA…VNSA), 5171 to 5229 (AMKG…ITQV), 5297 to 5355 (AMHS…VEQA), 5423 to 5481 (AMGQ…VERA), 5549 to 5607 (AMTA…VTNA), 5675 to 5733 (AMKG…INQA), 5801 to 5859 (AMTN…VETA), 5927 to 5985 (AMSN…VEQA), 6053 to 6111 (AMNQ…INQK), 6179 to 6236 (AMGN…VQAA), 6304 to 6362 (AMGQ…VEAA), 6430 to 6488 (AMQR…VEQA), 6556 to 6614 (AMDQ…VTAA), 6682 to 6740 (AMNQ…VTQA), 6818 to 6866 (DKDQ…VEAA), and 6934 to 6992 (AMGN…VEAA).

This chain is Extracellular matrix-binding protein EbhB (ebhB), found in Staphylococcus aureus (strain Newman).